The chain runs to 478 residues: Glycogen synthase (478 aa).

Lys15 lines the ADP-alpha-D-glucose pocket.

This sequence belongs to the glycosyltransferase 1 family. Bacterial/plant glycogen synthase subfamily.

The catalysed reaction is [(1-&gt;4)-alpha-D-glucosyl](n) + ADP-alpha-D-glucose = [(1-&gt;4)-alpha-D-glucosyl](n+1) + ADP + H(+). It functions in the pathway glycan biosynthesis; glycogen biosynthesis. In terms of biological role, synthesizes alpha-1,4-glucan chains using ADP-glucose. The chain is Glycogen synthase from Bacillus cytotoxicus (strain DSM 22905 / CIP 110041 / 391-98 / NVH 391-98).